Consider the following 492-residue polypeptide: Argininosuccinate lyase (492 aa).

It belongs to the lyase 1 family. Argininosuccinate lyase subfamily.

It localises to the cytoplasm. The catalysed reaction is 2-(N(omega)-L-arginino)succinate = fumarate + L-arginine. The protein operates within amino-acid biosynthesis; L-arginine biosynthesis; L-arginine from L-ornithine and carbamoyl phosphate: step 3/3. The protein is Argininosuccinate lyase of Methanocorpusculum labreanum (strain ATCC 43576 / DSM 4855 / Z).